Here is a 275-residue protein sequence, read N- to C-terminus: Large ribosomal subunit protein uL2 (275 aa).

2 disordered regions span residues lysine 36–glycine 55 and valine 223–arginine 275. A compositionally biased stretch (polar residues) spans lysine 39 to arginine 48. The span at aspartate 229 to threonine 239 shows a compositional bias: basic and acidic residues.

Belongs to the universal ribosomal protein uL2 family. In terms of assembly, part of the 50S ribosomal subunit. Forms a bridge to the 30S subunit in the 70S ribosome.

Its function is as follows. One of the primary rRNA binding proteins. Required for association of the 30S and 50S subunits to form the 70S ribosome, for tRNA binding and peptide bond formation. It has been suggested to have peptidyltransferase activity; this is somewhat controversial. Makes several contacts with the 16S rRNA in the 70S ribosome. The chain is Large ribosomal subunit protein uL2 from Aromatoleum aromaticum (strain DSM 19018 / LMG 30748 / EbN1) (Azoarcus sp. (strain EbN1)).